The chain runs to 403 residues: Lipase lipl-5 (403 aa).

The N-terminal stretch at 1 to 18 (MWRFAVFLAAFFVQDVVG) is a signal peptide. An N-linked (GlcNAc...) asparagine glycan is attached at N64. The active-site Nucleophile is the S167. A glycan (N-linked (GlcNAc...) asparagine) is linked at N271. Residues D343 and H375 each act as charge relay system in the active site.

It belongs to the AB hydrolase superfamily. Lipase family.

Its subcellular location is the lysosome lumen. The protein localises to the secreted. In terms of biological role, lipase involved in lipid homeostasis. Regulates mitochondrial lipid composition, in particular cardiolipins and coenzyme Q-9 levels, in response to nutrient availability. Does not affect global triglyceride levels in response to nutrient availability. However, in coelomocytes, specifically promotes triglyceride catabolism and lifespan extension in response to nutrient deprivation. The polypeptide is Lipase lipl-5 (Caenorhabditis elegans).